The following is a 198-amino-acid chain: Nucleoside triphosphate pyrophosphatase (198 aa).

The active-site Proton acceptor is the Asp-74.

This sequence belongs to the Maf family. It depends on a divalent metal cation as a cofactor.

The protein resides in the cytoplasm. The catalysed reaction is a ribonucleoside 5'-triphosphate + H2O = a ribonucleoside 5'-phosphate + diphosphate + H(+). It catalyses the reaction a 2'-deoxyribonucleoside 5'-triphosphate + H2O = a 2'-deoxyribonucleoside 5'-phosphate + diphosphate + H(+). Nucleoside triphosphate pyrophosphatase. May have a dual role in cell division arrest and in preventing the incorporation of modified nucleotides into cellular nucleic acids. This Sphingopyxis alaskensis (strain DSM 13593 / LMG 18877 / RB2256) (Sphingomonas alaskensis) protein is Nucleoside triphosphate pyrophosphatase.